The primary structure comprises 860 residues: DNA mismatch repair protein MutS (860 aa).

607-614 (GPNMSGKS) contributes to the ATP binding site.

The protein belongs to the DNA mismatch repair MutS family.

Its function is as follows. This protein is involved in the repair of mismatches in DNA. It is possible that it carries out the mismatch recognition step. This protein has a weak ATPase activity. The chain is DNA mismatch repair protein MutS from Listeria monocytogenes serotype 4b (strain CLIP80459).